The sequence spans 321 residues: PI-PLC X domain-containing protein 3 (321 aa).

A PI-PLC X-box domain is found at 22–197 (SIHSIPLTNL…DYQVLVFYHS (176 aa)). Catalysis depends on residues histidine 37 and histidine 114.

In terms of tissue distribution, widely expressed, with highest levels in brain, followed by heart atrium. Not detected in small intestine, nor stomach.

It is found in the cytoplasm. The polypeptide is PI-PLC X domain-containing protein 3 (Plcxd3) (Mus musculus (Mouse)).